Here is a 637-residue protein sequence, read N- to C-terminus: Threonine--tRNA ligase (637 aa).

Positions 1-61 (MVTVTLPDGS…DADAQLAIVT (61 aa)) constitute a TGS domain. Positions 244–535 (DHRRLAKQLD…LIEHHAGNFP (292 aa)) are catalytic. Residues Cys-335, His-386, and His-512 each contribute to the Zn(2+) site.

The protein belongs to the class-II aminoacyl-tRNA synthetase family. As to quaternary structure, homodimer. Requires Zn(2+) as cofactor.

It is found in the cytoplasm. The enzyme catalyses tRNA(Thr) + L-threonine + ATP = L-threonyl-tRNA(Thr) + AMP + diphosphate + H(+). Catalyzes the attachment of threonine to tRNA(Thr) in a two-step reaction: L-threonine is first activated by ATP to form Thr-AMP and then transferred to the acceptor end of tRNA(Thr). Also edits incorrectly charged L-seryl-tRNA(Thr). The sequence is that of Threonine--tRNA ligase from Thiobacillus denitrificans (strain ATCC 25259 / T1).